A 231-amino-acid polypeptide reads, in one-letter code: 7-cyano-7-deazaguanine synthase (231 aa).

An ATP-binding site is contributed by 11–21; it reads LSGGLDSATTM. Residues C195, C205, C208, and C211 each coordinate Zn(2+).

It belongs to the QueC family. It depends on Zn(2+) as a cofactor.

The catalysed reaction is 7-carboxy-7-deazaguanine + NH4(+) + ATP = 7-cyano-7-deazaguanine + ADP + phosphate + H2O + H(+). Its pathway is purine metabolism; 7-cyano-7-deazaguanine biosynthesis. Catalyzes the ATP-dependent conversion of 7-carboxy-7-deazaguanine (CDG) to 7-cyano-7-deazaguanine (preQ(0)). The polypeptide is 7-cyano-7-deazaguanine synthase (Syntrophus aciditrophicus (strain SB)).